Consider the following 126-residue polypeptide: Fluoride-specific ion channel FluC (126 aa).

Helical transmembrane passes span 7–24, 35–55, 69–89, and 98–118; these read LWVS…YFLS, FPWG…LFLV, LLIA…AYES, and WGLF…AVLG. Positions 77 and 80 each coordinate Na(+).

The protein belongs to the fluoride channel Fluc/FEX (TC 1.A.43) family.

The protein resides in the cell inner membrane. It carries out the reaction fluoride(in) = fluoride(out). Na(+) is not transported, but it plays an essential structural role and its presence is essential for fluoride channel function. In terms of biological role, fluoride-specific ion channel. Important for reducing fluoride concentration in the cell, thus reducing its toxicity. This is Fluoride-specific ion channel FluC from Koribacter versatilis (strain Ellin345).